We begin with the raw amino-acid sequence, 307 residues long: Elongation factor Ts (307 aa).

An involved in Mg(2+) ion dislocation from EF-Tu region spans residues 79 to 82 (TDFV).

The protein belongs to the EF-Ts family.

It is found in the cytoplasm. Associates with the EF-Tu.GDP complex and induces the exchange of GDP to GTP. It remains bound to the aminoacyl-tRNA.EF-Tu.GTP complex up to the GTP hydrolysis stage on the ribosome. The polypeptide is Elongation factor Ts (Bartonella tribocorum (strain CIP 105476 / IBS 506)).